A 606-amino-acid chain; its full sequence is Aspartate--tRNA(Asp/Asn) ligase (606 aa).

Residue Glu-187 participates in L-aspartate binding. Residues 211-214 form an aspartate region; it reads QQFK. 2 residues coordinate L-aspartate: Arg-233 and His-461. Position 233–235 (233–235) interacts with ATP; that stretch reads RDE. Glu-495 contacts ATP. Arg-502 is an L-aspartate binding site. Residue 547 to 550 participates in ATP binding; it reads GLDR.

Belongs to the class-II aminoacyl-tRNA synthetase family. Type 1 subfamily. In terms of assembly, homodimer.

The protein resides in the cytoplasm. It catalyses the reaction tRNA(Asx) + L-aspartate + ATP = L-aspartyl-tRNA(Asx) + AMP + diphosphate. Aspartyl-tRNA synthetase with relaxed tRNA specificity since it is able to aspartylate not only its cognate tRNA(Asp) but also tRNA(Asn). Reaction proceeds in two steps: L-aspartate is first activated by ATP to form Asp-AMP and then transferred to the acceptor end of tRNA(Asp/Asn). This is Aspartate--tRNA(Asp/Asn) ligase from Chlorobium phaeobacteroides (strain DSM 266 / SMG 266 / 2430).